Consider the following 457-residue polypeptide: tRNA-2-methylthio-N(6)-dimethylallyladenosine synthase (457 aa).

The MTTase N-terminal domain maps to 3-120 (KKVYVKTFGC…LPQMIDARRA (118 aa)). C12, C49, C83, C157, C161, and C164 together coordinate [4Fe-4S] cluster. The Radical SAM core domain maps to 143 to 377 (RVEGPSAFVS…QATIEENVAR (235 aa)). The TRAM domain occupies 380–447 (QSMVGKVERI…PHSLRGELVL (68 aa)).

This sequence belongs to the methylthiotransferase family. MiaB subfamily. In terms of assembly, monomer. The cofactor is [4Fe-4S] cluster.

Its subcellular location is the cytoplasm. The enzyme catalyses N(6)-dimethylallyladenosine(37) in tRNA + (sulfur carrier)-SH + AH2 + 2 S-adenosyl-L-methionine = 2-methylsulfanyl-N(6)-dimethylallyladenosine(37) in tRNA + (sulfur carrier)-H + 5'-deoxyadenosine + L-methionine + A + S-adenosyl-L-homocysteine + 2 H(+). Catalyzes the methylthiolation of N6-(dimethylallyl)adenosine (i(6)A), leading to the formation of 2-methylthio-N6-(dimethylallyl)adenosine (ms(2)i(6)A) at position 37 in tRNAs that read codons beginning with uridine. The polypeptide is tRNA-2-methylthio-N(6)-dimethylallyladenosine synthase (Burkholderia cenocepacia (strain HI2424)).